A 1166-amino-acid chain; its full sequence is Poly [ADP-ribose] polymerase tankyrase-2 (1166 aa).

ANK repeat units follow at residues 57 to 89 (RKSTPLHFAAGFGRKDVVEYLLQNGANVQARDD), 90 to 122 (GGLIPLHNACSFGHAEVVNLLLRHGADPNARDN), and 123 to 155 (WNYTPLHEAAIKGKIDVCIVLLQHGAEPTIRNT). A (3S)-3-hydroxyasparagine; by HIF1AN; partial modification is found at N203. 6 ANK repeats span residues 210 to 242 (RKSTPLHLAAGYNRVKIVQLLLQHGADVHAKDK), 243 to 275 (GDLVPLHNACSYGHYEVTELLVKHGACVNAMDL), 276 to 308 (WQFTPLHEAASKNRVEVCSLLLSYGADPTLLNC), 363 to 398 (THETALHCAAASPYPKRKQICELLLRKGANINEKTK), 399 to 431 (EFLTPLHVASEKAHNDVVEVVVKHEAKVNALDN), and 432 to 464 (LGQTSLHRAAYCGHLQTCRLLLSYGCDPNIISL). A (3S)-3-hydroxyhistidine; by HIF1AN; partial modification is found at H238. N271 is subject to (3S)-3-hydroxyasparagine; by HIF1AN; partial. N427 is subject to (3S)-3-hydroxyasparagine; by HIF1AN; partial. The residue at position 518 (N518) is a (3S)-3-hydroxyasparagine; by HIF1AN; partial. 3 ANK repeats span residues 525–557 (RQSTPLHFAAGYNRVSVVEYLLQHGADVHAKDK), 558–590 (GGLVPLHNACSYGHYEVAELLVKHGAVVNVADL), and 591–623 (WKFTPLHEAAAKGKYEICKLLLQHGADPTKKNR). The HIF1AN-binding stretch occupies residues 545 to 553 (LLQHGADVH). H553 is modified ((3S)-3-hydroxyhistidine; by HIF1AN; partial). (3S)-3-hydroxyasparagine; by HIF1AN; partial is present on N586. 3 positions are modified to (3S)-3-hydroxyasparagine; by HIF1AN; partial: N671, N706, and N739. 3 ANK repeats span residues 678–710 (RHSTPLHLAAGYNNLEVAEYLLQHGADVNAQDK), 711–743 (GGLIPLHNAASYGHVDVAALLIKYNACVNATDK), and 744–776 (WAFTPLHEAAQKGRTQLCALLLAHGADPTLKNQ). Residues 819 to 839 (GATADALSSGPSSPSSLSAAS) form a disordered region. The span at 822–839 (ADALSSGPSSPSSLSAAS) shows a compositional bias: low complexity. Residues 873 to 936 (GVDFSITQFV…IKGVERLISG (64 aa)) enclose the SAM domain. Positions 959–1164 (SPDDKEFQSV…YQIMRPEGMV (206 aa)) constitute a PARP catalytic domain. Residues C1081, H1084, C1089, and C1092 each contribute to the Zn(2+) site.

Belongs to the ARTD/PARP family. Oligomerizes and associates with TNKS. Interacts with the cytoplasmic domain of LNPEP/Otase in SLC2A4/GLUT4-vesicles. Binds to the N-terminus of Grb14 and TRF1 with its ankyrin repeat region. Interacts with HIF1AN. Interacts with RNF146; this interaction leads to ubiquitination and proteasomal degradation. Interacts with NUMA1. Post-translationally, ubiquitinated at 'Lys-48' and 'Lys-63' by RNF146 when auto-poly-ADP-ribosylated; this leads to degradation. Deubiquitinated by USP25; leading to stabilization. In terms of processing, ADP-ribosylated (-auto). Poly-ADP-ribosylated protein is recognized by RNF146, followed by ubiquitination. The crystallographic evidence suggests that the 3-hydroxyhistidine may be the (3S) stereoisomer. Highly expressed in placenta, skeletal muscle, liver, brain, kidney, heart, thymus, spinal cord, lung, peripheral blood leukocytes, pancreas, lymph nodes, spleen, prostate, testis, ovary, small intestine, colon, mammary gland, breast and breast carcinoma, and in common-type meningioma. Highly expressed in fetal liver, heart and brain.

The protein resides in the cytoplasm. The protein localises to the golgi apparatus membrane. It localises to the nucleus. It is found in the chromosome. Its subcellular location is the telomere. The enzyme catalyses NAD(+) + (ADP-D-ribosyl)n-acceptor = nicotinamide + (ADP-D-ribosyl)n+1-acceptor + H(+).. It carries out the reaction L-aspartyl-[protein] + NAD(+) = 4-O-(ADP-D-ribosyl)-L-aspartyl-[protein] + nicotinamide. It catalyses the reaction L-glutamyl-[protein] + NAD(+) = 5-O-(ADP-D-ribosyl)-L-glutamyl-[protein] + nicotinamide. With respect to regulation, specifically inhibited by XAV939, a small molecule, leading to inhibit the Wnt signaling pathway by stabilizing AXIN1 and AXIN2. Inhibited by talazoparib. In terms of biological role, poly-ADP-ribosyltransferase involved in various processes such as Wnt signaling pathway, telomere length and vesicle trafficking. Acts as an activator of the Wnt signaling pathway by mediating poly-ADP-ribosylation of AXIN1 and AXIN2, 2 key components of the beta-catenin destruction complex: poly-ADP-ribosylated target proteins are recognized by RNF146, which mediates their ubiquitination and subsequent degradation. Also mediates poly-ADP-ribosylation of BLZF1 and CASC3, followed by recruitment of RNF146 and subsequent ubiquitination. Mediates poly-ADP-ribosylation of TERF1, thereby contributing to the regulation of telomere length. Stimulates 26S proteasome activity. This is Poly [ADP-ribose] polymerase tankyrase-2 from Homo sapiens (Human).